Here is a 448-residue protein sequence, read N- to C-terminus: Tryptamine benzoyltransferase 2 (448 aa).

Residues M1–L20 are disordered. Active-site proton acceptor residues include H155 and D386.

This sequence belongs to the plant acyltransferase family.

Its function is as follows. Hydroxycinnamoyl transferase that catalyzes the transfer of an acyl from benzoyl-CoA to tryptamine, to produce benzoyl tryptamine. Serotonin and tyramine serve as acyl acceptors in vitro. Specific for benzoyl-CoA as acyl donor. Has no activity with p-coumaroyl-CoA, caffeoyl-CoA, or feruloyl-CoA as acyl donors. This Oryza sativa subsp. japonica (Rice) protein is Tryptamine benzoyltransferase 2.